A 440-amino-acid chain; its full sequence is MSAQSPQVRQPPATPTYILRGHAAAIHALQIFHQNLRLVSGDADGWIVVWDLVSKRPRATWKAHDGTVLEVKGFSFGNGAVTEVFTHGRDHKLRVWRFSLQDEESLQKVLPVDIEKTSSTAASQPWLVHSLPVNALNFCAFSMVFLPPDKANTASDASEAPKENTSLSSVLIAVPNALNSGAIDLFHLPQERRICTIPADTEVQTGMVMAANLVISPSGELYVASAYEDGRVMVHGCRGSLQEKDLTQSTKTPWKWEKLYVCRAHSQPVLSLHVSPAGNYFFSSSADAVLAKHPIPSLGSPGHAPEELPIRSINTKHAGQQGVRIRSDGKIFATAGWDSRVRVYSCKTMKELAVLKWHKDGCYAVAFADVDVFEVREKSDEEKPTVSPNDNGNQENQLAGRAETEFSLATVHRQRYEKVQNTHWLAAGSKDGKISLWDIY.

WD repeat units lie at residues 21-60 (GHAA…PRAT), 66-107 (GTVL…ESLQ), 205-245 (TGMV…QEKD), 264-303 (AHSQ…SPGH), 315-354 (TKHA…ELAV), and 406-440 (FSLA…WDIY).

The protein belongs to the WD repeat ASA1 family. As to quaternary structure, component of the ASTRA chromatin remodeling machinery complex.

It localises to the nucleus. In terms of biological role, component of the ASTRA complex involved in chromatin remodeling. The protein is ASTRA-associated protein 1 (asa1) of Aspergillus niger (strain ATCC MYA-4892 / CBS 513.88 / FGSC A1513).